Consider the following 399-residue polypeptide: MAKEKFVRAKTHMNVGTIGHIDHGKTTLTAAITKALSYKGGADFTPFDMIDKAPEEKARGITINVSHVEYQTDKRHYAHIDCPGHADYIKNMITGAAQMDGAILVVAATDGVMPQTREHVLLARQVNVPALVVFINKVDMVDDEELIDLVEMEVRDLLNSYEFPGDEVPVIRGSALKALEEDNPDGPWTQKIYELMDAVDSYFPDPVREIDKPFLMPIEDIFSITGRGTVVTGRIERGVVHTGDQVEIIGLSYETKKTVVTGVEMFRKILDEGEAGDNVGCLLRGIEKDEVKRGQVLAAPGSITPHKKFKAEVYVLKKEEGGRHTPFTKGYRPQFYIRTADVTGTLVEFSSGAEMVMPGDNINMTVELIYPVALEEGMRFAIREGGRTVGAGVVTEIIE.

The tr-type G domain occupies 10 to 207 (KTHMNVGTIG…AVDSYFPDPV (198 aa)). Residues 19–26 (GHIDHGKT) are G1. 19 to 26 (GHIDHGKT) provides a ligand contact to GTP. A Mg(2+)-binding site is contributed by threonine 26. The tract at residues 60 to 64 (GITIN) is G2. The segment at 81 to 84 (DCPG) is G3. Residues 81-85 (DCPGH) and 136-139 (NKVD) each bind GTP. The tract at residues 136 to 139 (NKVD) is G4. Residues 174-176 (SAL) are G5.

The protein belongs to the TRAFAC class translation factor GTPase superfamily. Classic translation factor GTPase family. EF-Tu/EF-1A subfamily. Monomer.

The protein localises to the cytoplasm. It catalyses the reaction GTP + H2O = GDP + phosphate + H(+). Functionally, GTP hydrolase that promotes the GTP-dependent binding of aminoacyl-tRNA to the A-site of ribosomes during protein biosynthesis. The protein is Elongation factor Tu of Petrotoga mobilis (strain DSM 10674 / SJ95).